The primary structure comprises 273 residues: Ribosomal RNA small subunit methyltransferase A (273 aa).

Positions 18, 20, 45, 66, 91, and 113 each coordinate S-adenosyl-L-methionine.

Belongs to the class I-like SAM-binding methyltransferase superfamily. rRNA adenine N(6)-methyltransferase family. RsmA subfamily.

It is found in the cytoplasm. The enzyme catalyses adenosine(1518)/adenosine(1519) in 16S rRNA + 4 S-adenosyl-L-methionine = N(6)-dimethyladenosine(1518)/N(6)-dimethyladenosine(1519) in 16S rRNA + 4 S-adenosyl-L-homocysteine + 4 H(+). Functionally, specifically dimethylates two adjacent adenosines (A1518 and A1519) in the loop of a conserved hairpin near the 3'-end of 16S rRNA in the 30S particle. May play a critical role in biogenesis of 30S subunits. The polypeptide is Ribosomal RNA small subunit methyltransferase A (Erwinia tasmaniensis (strain DSM 17950 / CFBP 7177 / CIP 109463 / NCPPB 4357 / Et1/99)).